The primary structure comprises 181 residues: Peptide deformylase (181 aa).

Residues Cys103 and His145 each contribute to the Fe cation site. Residue Glu146 is part of the active site. His149 provides a ligand contact to Fe cation.

It belongs to the polypeptide deformylase family. Fe(2+) is required as a cofactor.

It carries out the reaction N-terminal N-formyl-L-methionyl-[peptide] + H2O = N-terminal L-methionyl-[peptide] + formate. In terms of biological role, removes the formyl group from the N-terminal Met of newly synthesized proteins. Requires at least a dipeptide for an efficient rate of reaction. N-terminal L-methionine is a prerequisite for activity but the enzyme has broad specificity at other positions. This Orientia tsutsugamushi (strain Boryong) (Rickettsia tsutsugamushi) protein is Peptide deformylase.